Here is a 236-residue protein sequence, read N- to C-terminus: Purine nucleoside phosphorylase DeoD-type (236 aa).

Residue histidine 5 participates in a purine D-ribonucleoside binding. Residues glycine 21, arginine 25, arginine 44, and arginine 88–serine 91 contribute to the phosphate site. Residues aspartate 180–glutamate 182 and serine 204–aspartate 205 each bind a purine D-ribonucleoside. Catalysis depends on aspartate 205, which acts as the Proton donor.

Belongs to the PNP/UDP phosphorylase family. As to quaternary structure, homohexamer; trimer of homodimers.

The catalysed reaction is a purine D-ribonucleoside + phosphate = a purine nucleobase + alpha-D-ribose 1-phosphate. It catalyses the reaction a purine 2'-deoxy-D-ribonucleoside + phosphate = a purine nucleobase + 2-deoxy-alpha-D-ribose 1-phosphate. In terms of biological role, catalyzes the reversible phosphorolytic breakdown of the N-glycosidic bond in the beta-(deoxy)ribonucleoside molecules, with the formation of the corresponding free purine bases and pentose-1-phosphate. This is Purine nucleoside phosphorylase DeoD-type from Aliivibrio salmonicida (strain LFI1238) (Vibrio salmonicida (strain LFI1238)).